Reading from the N-terminus, the 390-residue chain is Dual-specificity RNA methyltransferase RlmN (390 aa).

Catalysis depends on glutamate 110, which acts as the Proton acceptor. Residues 116–355 (EADRATLCVS…VIIRKTRGDD (240 aa)) enclose the Radical SAM core domain. Cysteine 123 and cysteine 360 are disulfide-bonded. Residues cysteine 130, cysteine 134, and cysteine 137 each coordinate [4Fe-4S] cluster. S-adenosyl-L-methionine contacts are provided by residues 184–185 (GE), serine 216, 238–240 (SLH), and asparagine 317. The active-site S-methylcysteine intermediate is the cysteine 360.

Belongs to the radical SAM superfamily. RlmN family. [4Fe-4S] cluster serves as cofactor.

It is found in the cytoplasm. The enzyme catalyses adenosine(2503) in 23S rRNA + 2 reduced [2Fe-2S]-[ferredoxin] + 2 S-adenosyl-L-methionine = 2-methyladenosine(2503) in 23S rRNA + 5'-deoxyadenosine + L-methionine + 2 oxidized [2Fe-2S]-[ferredoxin] + S-adenosyl-L-homocysteine. The catalysed reaction is adenosine(37) in tRNA + 2 reduced [2Fe-2S]-[ferredoxin] + 2 S-adenosyl-L-methionine = 2-methyladenosine(37) in tRNA + 5'-deoxyadenosine + L-methionine + 2 oxidized [2Fe-2S]-[ferredoxin] + S-adenosyl-L-homocysteine. Specifically methylates position 2 of adenine 2503 in 23S rRNA and position 2 of adenine 37 in tRNAs. m2A2503 modification seems to play a crucial role in the proofreading step occurring at the peptidyl transferase center and thus would serve to optimize ribosomal fidelity. This is Dual-specificity RNA methyltransferase RlmN from Haemophilus influenzae (strain 86-028NP).